The chain runs to 279 residues: Fatty acid desaturase 4-like 2, chloroplastic (279 aa).

A chloroplast-targeting transit peptide spans 1–30 (MATSLQTKYTLNPITNNIPRSHRPSFLRVT). The next 3 membrane-spanning stretches (helical) occupy residues 68-90 (LWVA…GAFG), 98-118 (SLAG…YHWA), and 178-198 (VVHG…LFHA).

It belongs to the fatty acid desaturase CarF family.

It is found in the plastid. Its subcellular location is the chloroplast membrane. It participates in lipid metabolism; fatty acid metabolism. In terms of biological role, fatty acid desaturase involved in the production of chloroplast-specific phosphatidylglycerol molecular species. Catalyzes the formation of a trans double bond introduced close to the carboxyl group of palmitic acid, which is specifically esterified to the sn-2 glyceryl carbon of phosphatidylglycerol. The sequence is that of Fatty acid desaturase 4-like 2, chloroplastic (FAD4L2) from Arabidopsis thaliana (Mouse-ear cress).